We begin with the raw amino-acid sequence, 311 residues long: T-cell acute lymphocytic leukemia protein 1 homolog (311 aa).

Pro residues predominate over residues 1–14; it reads MTMDRPPAPPPPSS. Residues 1–67 form a disordered region; the sequence is MTMDRPPAPP…RPSPGPPAAA (67 aa). Over residues 15–25 the composition is skewed to basic and acidic residues; sequence DPRDARRHDPE. Positions 179–231 constitute a bHLH domain; the sequence is VRRIFTNSRERWRQQNVNGAFAELRKLIPTHPPDKKLSKNEILRLAMKYINFL. Residues 265-311 form a disordered region; that stretch reads SPNSSCGSSLDGAASPDSFTEEHDTLDSKHARNLHHAILPVEGSAQR. A compositionally biased stretch (basic and acidic residues) spans 284-294; the sequence is TEEHDTLDSKH.

As to quaternary structure, efficient DNA binding requires dimerization with another bHLH protein. Forms heterodimers with TCF3. In terms of processing, phosphorylated on serine residues.

The protein localises to the nucleus. In terms of biological role, implicated in the genesis of hemopoietic malignancies. It may play an important role in hemopoietic differentiation. This Gallus gallus (Chicken) protein is T-cell acute lymphocytic leukemia protein 1 homolog (TAL1).